A 351-amino-acid polypeptide reads, in one-letter code: DNA polymerase IV (351 aa).

One can recognise a UmuC domain in the interval 4–185 (IIHVDMDCFF…LPLAKIPGVG (182 aa)). Mg(2+) contacts are provided by aspartate 8 and aspartate 103. Glutamate 104 is a catalytic residue.

Belongs to the DNA polymerase type-Y family. In terms of assembly, monomer. Mg(2+) is required as a cofactor.

The protein resides in the cytoplasm. It carries out the reaction DNA(n) + a 2'-deoxyribonucleoside 5'-triphosphate = DNA(n+1) + diphosphate. Poorly processive, error-prone DNA polymerase involved in untargeted mutagenesis. Copies undamaged DNA at stalled replication forks, which arise in vivo from mismatched or misaligned primer ends. These misaligned primers can be extended by PolIV. Exhibits no 3'-5' exonuclease (proofreading) activity. May be involved in translesional synthesis, in conjunction with the beta clamp from PolIII. This Salmonella paratyphi B (strain ATCC BAA-1250 / SPB7) protein is DNA polymerase IV.